A 449-amino-acid polypeptide reads, in one-letter code: NADP-specific glutamate dehydrogenase (449 aa).

Substrate-binding residues include Lys-92, Gln-113, and Lys-116. Lys-128 acts as the Proton donor in catalysis. Gly-167 serves as a coordination point for substrate. Thr-211 and Asn-242 together coordinate NADP(+). Ser-380 contacts substrate.

The protein belongs to the Glu/Leu/Phe/Val dehydrogenases family. Homohexamer.

The enzyme catalyses L-glutamate + NADP(+) + H2O = 2-oxoglutarate + NH4(+) + NADPH + H(+). In terms of biological role, catalyzes the reversible oxidative deamination of glutamate to alpha-ketoglutarate and ammonia. The chain is NADP-specific glutamate dehydrogenase (gdhA) from Haemophilus influenzae (strain ATCC 51907 / DSM 11121 / KW20 / Rd).